We begin with the raw amino-acid sequence, 314 residues long: 4-hydroxy-3-methylbut-2-enyl diphosphate reductase (314 aa).

Residue Cys12 coordinates [4Fe-4S] cluster. 2 residues coordinate (2E)-4-hydroxy-3-methylbut-2-enyl diphosphate: His41 and His74. Dimethylallyl diphosphate contacts are provided by His41 and His74. The isopentenyl diphosphate site is built by His41 and His74. Cys96 serves as a coordination point for [4Fe-4S] cluster. His124 is a (2E)-4-hydroxy-3-methylbut-2-enyl diphosphate binding site. His124 serves as a coordination point for dimethylallyl diphosphate. His124 is an isopentenyl diphosphate binding site. The Proton donor role is filled by Glu126. Residue Thr167 participates in (2E)-4-hydroxy-3-methylbut-2-enyl diphosphate binding. Cys197 contributes to the [4Fe-4S] cluster binding site. (2E)-4-hydroxy-3-methylbut-2-enyl diphosphate is bound by residues Ser225, Ser226, Asn227, and Ser269. Residues Ser225, Ser226, Asn227, and Ser269 each coordinate dimethylallyl diphosphate. Ser225, Ser226, Asn227, and Ser269 together coordinate isopentenyl diphosphate.

Belongs to the IspH family. The cofactor is [4Fe-4S] cluster.

It carries out the reaction isopentenyl diphosphate + 2 oxidized [2Fe-2S]-[ferredoxin] + H2O = (2E)-4-hydroxy-3-methylbut-2-enyl diphosphate + 2 reduced [2Fe-2S]-[ferredoxin] + 2 H(+). It catalyses the reaction dimethylallyl diphosphate + 2 oxidized [2Fe-2S]-[ferredoxin] + H2O = (2E)-4-hydroxy-3-methylbut-2-enyl diphosphate + 2 reduced [2Fe-2S]-[ferredoxin] + 2 H(+). The protein operates within isoprenoid biosynthesis; dimethylallyl diphosphate biosynthesis; dimethylallyl diphosphate from (2E)-4-hydroxy-3-methylbutenyl diphosphate: step 1/1. Its pathway is isoprenoid biosynthesis; isopentenyl diphosphate biosynthesis via DXP pathway; isopentenyl diphosphate from 1-deoxy-D-xylulose 5-phosphate: step 6/6. In terms of biological role, catalyzes the conversion of 1-hydroxy-2-methyl-2-(E)-butenyl 4-diphosphate (HMBPP) into a mixture of isopentenyl diphosphate (IPP) and dimethylallyl diphosphate (DMAPP). Acts in the terminal step of the DOXP/MEP pathway for isoprenoid precursor biosynthesis. In Pseudoalteromonas atlantica (strain T6c / ATCC BAA-1087), this protein is 4-hydroxy-3-methylbut-2-enyl diphosphate reductase.